Consider the following 553-residue polypeptide: Sulfatase (553 aa).

An N-terminal signal peptide occupies residues 1 to 25 (MTSEMKKFSKIVLFGLLISPLLASS). Ca(2+)-binding residues include Asp43, Asp44, and Cys88. Cys88 (nucleophile) is an active-site residue. 3-oxoalanine (Cys) is present on Cys88. His159 is a catalytic residue. Positions 350 and 351 each coordinate Ca(2+).

This sequence belongs to the sulfatase family. Ca(2+) serves as cofactor. In terms of processing, the conversion to 3-oxoalanine (also known as C-formylglycine, FGly), of a serine or cysteine residue in prokaryotes and of a cysteine residue in eukaryotes, is critical for catalytic activity. This post-translational modification is severely defective in multiple sulfatase deficiency (MSD).

Its subcellular location is the secreted. In terms of biological role, sulfatase that may be involved in ulvan degradation. Ulvan is the main polysaccharide component of the Ulvales (green seaweed) cell wall. It is composed of disaccharide building blocks comprising 3-sulfated rhamnose (Rha3S) linked to D-glucuronic acid (GlcA), L-iduronic acid (IduA), or D-xylose (Xyl). This chain is Sulfatase, found in Formosa agariphila (strain DSM 15362 / KCTC 12365 / LMG 23005 / KMM 3901 / M-2Alg 35-1).